Here is a 227-residue protein sequence, read N- to C-terminus: Putative molybdenum transport system permease protein YvgM (227 aa).

Helical transmembrane passes span valine 17–leucine 37, phenylalanine 57–glycine 77, valine 94–tyrosine 114, valine 142–serine 162, and threonine 201–isoleucine 221. The 205-residue stretch at valine 17–isoleucine 221 folds into the ABC transmembrane type-1 domain.

The protein belongs to the binding-protein-dependent transport system permease family. CysTW subfamily.

Its subcellular location is the cell membrane. Could be part of the binding-protein-dependent transport system for molybdenum; probably responsible for the translocation of the substrate across the membrane. This chain is Putative molybdenum transport system permease protein YvgM (yvgM), found in Bacillus subtilis (strain 168).